A 198-amino-acid polypeptide reads, in one-letter code: FMN-dependent NADH:quinone oxidoreductase (198 aa).

Residues S10, 16–18, 94–97, and 138–141 each bind FMN; these read SQS, MYNF, and TRGG.

This sequence belongs to the azoreductase type 1 family. Homodimer. It depends on FMN as a cofactor.

It carries out the reaction 2 a quinone + NADH + H(+) = 2 a 1,4-benzosemiquinone + NAD(+). It catalyses the reaction N,N-dimethyl-1,4-phenylenediamine + anthranilate + 2 NAD(+) = 2-(4-dimethylaminophenyl)diazenylbenzoate + 2 NADH + 2 H(+). Quinone reductase that provides resistance to thiol-specific stress caused by electrophilic quinones. Its function is as follows. Also exhibits azoreductase activity. Catalyzes the reductive cleavage of the azo bond in aromatic azo compounds to the corresponding amines. This is FMN-dependent NADH:quinone oxidoreductase from Shewanella oneidensis (strain ATCC 700550 / JCM 31522 / CIP 106686 / LMG 19005 / NCIMB 14063 / MR-1).